The sequence spans 331 residues: Protoheme IX farnesyltransferase (331 aa).

The next 9 helical transmembrane spans lie at 22-42 (LVKP…MWMA), 50-70 (FGVT…INMV), 100-120 (FAGI…NLLA), 147-167 (IVIG…AATG), 174-194 (WVMF…LAIL), 220-240 (ILLY…PLHV), 241-261 (LGSF…WKAV), 273-293 (ATSL…AMGL), and 307-327 (LASL…LGAM).

This sequence belongs to the UbiA prenyltransferase family. Protoheme IX farnesyltransferase subfamily.

It is found in the cell inner membrane. The catalysed reaction is heme b + (2E,6E)-farnesyl diphosphate + H2O = Fe(II)-heme o + diphosphate. It participates in porphyrin-containing compound metabolism; heme O biosynthesis; heme O from protoheme: step 1/1. Its function is as follows. Converts heme B (protoheme IX) to heme O by substitution of the vinyl group on carbon 2 of heme B porphyrin ring with a hydroxyethyl farnesyl side group. This Synechococcus sp. (strain JA-3-3Ab) (Cyanobacteria bacterium Yellowstone A-Prime) protein is Protoheme IX farnesyltransferase.